A 278-amino-acid chain; its full sequence is MEENMEEGQTQKGCFECCIKCLGGIPYASLIATILLYAGVALFCGCGHEALSGTVTILQNNFEVVRGAGDTIDVFTMIDIFKYVIYGVAAAFFVYGILLMVEGFFTTGAIKDLYGDFKITTCGRCVSGWFIMLTYIFMLAWLGVTAFTSLPVFMYFNIWTLCQNVTIMESTDLCFDLRQFGIVPIHEQKTVCTLNENFSKLCQSNDLNMTFHLFIVALAGAGAAVIAMVHYLMVLSANWAYVKDACRMQKYEDIKSKEEQELHDIHSTRSKERLNAYT.

4 helical membrane passes run 30 to 46 (LIAT…FCGC), 84 to 100 (VIYG…ILLM), 130 to 146 (FIML…GVTA), and 213 to 229 (LFIV…IAMV).

The protein belongs to the myelin proteolipid protein family.

It localises to the membrane. This is Proteolipid protein DM beta from Squalus acanthias (Spiny dogfish).